A 148-amino-acid polypeptide reads, in one-letter code: uncharacterized protein (148 aa).

The span at 1 to 11 shows a compositional bias: polar residues; sequence MKPRNINNSLP. Residues 1-31 form a disordered region; the sequence is MKPRNINNSLPLQPLVPDQENKNKKNEEKSV. Over residues 19-30 the composition is skewed to basic and acidic residues; it reads QENKNKKNEEKS.

This is an uncharacterized protein from Escherichia coli (strain K12).